A 328-amino-acid chain; its full sequence is Malate dehydrogenase (328 aa).

Position 11–17 (11–17 (GAAGQIG)) interacts with NAD(+). Residues R94 and R100 each coordinate substrate. NAD(+) is bound by residues N107, Q114, and 131-133 (VGN). N133 and R164 together coordinate substrate. The active-site Proton acceptor is the H189.

The protein belongs to the LDH/MDH superfamily. MDH type 2 family.

The enzyme catalyses (S)-malate + NAD(+) = oxaloacetate + NADH + H(+). Functionally, catalyzes the reversible oxidation of malate to oxaloacetate. In Xanthomonas euvesicatoria pv. vesicatoria (strain 85-10) (Xanthomonas campestris pv. vesicatoria), this protein is Malate dehydrogenase.